A 1197-amino-acid chain; its full sequence is MTSGDKETPKREDFASALRFLMGGCAREPEMTAMAPLNLPKKWARILRMSSTPKIPIVDYLEAAESGNLDDFKRLFMADNSRIALKDAKGRTAAHQAAARNRVNILRYIRDQNGDFNAKDNAGNTPLHIAVESDAYDALDYLLSIPVDTGVLNEKKQAPVHLATELNKVKSLRVMGQYRNVIDIQQGGEHGRTALHLAAIYDHEECARILITEFDACPRKPCNNGYYPIHEAAKNASSKTMEVFFQWGEQRGCTREEMISFYDSEGNVPLHSAVHGGDIKAVELCLKSGAKISTQQHDLSTPVHLACAQGAIDIVKLMFEMQPMEKRLCLSCTDVQKMTPLHCASMFDHPDIVSYLVAEGADINALDKEHRSPLLLAASRSGWKTVHLLIRLGACISVKDAAARNVLHFVIMNGGRLTDFAEQVANCQTQAQLKLLLNEKDSMGCSPLHYASRDGHIRSLENLIRLGACINLKNNNNESPLHFAARYGRYNTVRQLLDSEKGSFIINESDGAGMTPLHISSQQGHTRVVQLLLNRGALLHRDHTGRNPLQLAAMSGYTETIELLHSVHSHLLDQVDKDGNTALHLATMENKPHAISVLMSMGCKLVYNVLDMSAIDYAIYYKYPEAALAMVTHEERANEVMALRSDKHPCVTLALIASMPKVFEAVQDKCITKANCKKDSKSFYIKYSFAFLQCPFMFAKIDEKTGESITTASPIPLPALNTMVTHGRVELLAHPLSQKYLQMKWNSYGKYFHLANLLIYSIFLVFVTIYSSLMMNNIELKAGDNKTMSQYCNMGWEQLTMNLSQNPSVASQIRLDSCEERINRTTAILFCAVVIVVYILLNSMRELIQIYQQKLHYILETVNLISWVLYISALVMVTPAFQPDGGINTIHYSAASIAVFLSWFRLLLFLQRFDQVGIYVVMFLEILQTLIKVLMVFSILIIAFGLAFYILLSKIIDPQPNHLSFSNIPMSLLRTFSMMLGELDFVGTYVNTYYRDQLKVPMTSFLILSVFMILMPILLMNLLIGLAVGDIESVRRNAQLKRLAMQVVLHTELERKLPHVWLQRVDKMELIEYPNETKCKLGFCDFILRKWFSNPFTEDSSMDVISFDNNDDYINAELERQRRKLRDISRMLEQQHHLVRLIVQKMEIKTEADDVDEGISPNELRSVVGLRSAGGNRWNSPRVRNKLRAALSFNKSM.

At 1 to 753 (MTSGDKETPK…KWNSYGKYFH (753 aa)) the chain is on the cytoplasmic side. ANK repeat units follow at residues 89 to 118 (KGRT…DFNA), 122 to 151 (AGNT…DTGV), 155 to 184 (KKQA…VIDI), 190 to 219 (HGRT…ACPR), 224 to 253 (NGYY…QRGC), 265 to 294 (EGNV…KIST), 298 to 327 (DLST…MEKR), 336 to 365 (QKMT…DINA), 369 to 398 (EHRS…CISV), 443 to 472 (MGCS…CINL), 476 to 505 (NNES…GSFI), 512 to 541 (AGMT…LLHR), 544 to 574 (TGRN…LLDQ), and 578 to 607 (DGNT…KLVY). A helical transmembrane segment spans residues 754–774 (LANLLIYSIFLVFVTIYSSLM). At 775-827 (MNNIELKAGDNKTMSQYCNMGWEQLTMNLSQNPSVASQIRLDSCEERINRTTA) the chain is on the extracellular side. 3 N-linked (GlcNAc...) asparagine glycosylation sites follow: N785, N802, and N823. The chain crosses the membrane as a helical span at residues 828-848 (ILFCAVVIVVYILLNSMRELI). Residues 849–856 (QIYQQKLH) are Cytoplasmic-facing. Residues 857–877 (YILETVNLISWVLYISALVMV) traverse the membrane as a helical segment. The Extracellular portion of the chain corresponds to 878 to 889 (TPAFQPDGGINT). The helical transmembrane segment at 890–910 (IHYSAASIAVFLSWFRLLLFL) threads the bilayer. The Cytoplasmic segment spans residues 911-932 (QRFDQVGIYVVMFLEILQTLIK). A helical membrane pass occupies residues 933–953 (VLMVFSILIIAFGLAFYILLS). The Extracellular portion of the chain corresponds to 954–968 (KIIDPQPNHLSFSNI). Residues 969–989 (PMSLLRTFSMMLGELDFVGTY) constitute an intramembrane region (pore-forming). At 990 to 1004 (VNTYYRDQLKVPMTS) the chain is on the extracellular side. Residues 1005 to 1025 (FLILSVFMILMPILLMNLLIG) form a helical membrane-spanning segment. The Cytoplasmic portion of the chain corresponds to 1026 to 1197 (LAVGDIESVR…RAALSFNKSM (172 aa)).

The protein belongs to the transient receptor (TC 1.A.4) family. As to quaternary structure, homotetramer.

The protein resides in the cell membrane. Essential for thermotaxis by sensing environmental temperature. Receptor-activated non-selective cation channel involved in detection of sensations such as temperature. Involved in heat nociception by being activated by warm temperature of about 24-29 degrees Celsius. This Drosophila melanogaster (Fruit fly) protein is Transient receptor potential cation channel subfamily A member 1 (TrpA1).